A 90-amino-acid polypeptide reads, in one-letter code: UPF0237 protein MJ1558 (90 aa).

The 75-residue stretch at 5–79 (VVSVIGQDRT…EELGVQVIVQ (75 aa)) folds into the ACT domain.

Belongs to the UPF0237 family.

The polypeptide is UPF0237 protein MJ1558 (Methanocaldococcus jannaschii (strain ATCC 43067 / DSM 2661 / JAL-1 / JCM 10045 / NBRC 100440) (Methanococcus jannaschii)).